Consider the following 315-residue polypeptide: tRNA wybutosine-synthesizing protein 5 (315 aa).

The region spanning 102-267 (DEKYYLRSLG…YDTTDTYGNK (166 aa)) is the JmjC domain. Tyr-106 is a binding site for 2-oxoglutarate. Fe cation is bound by residues His-160 and Asp-162. 2-oxoglutarate-binding residues include Asn-166 and Lys-175. Fe cation is bound at residue His-235.

Belongs to the TYW5 family. In terms of assembly, homodimer. Fe(2+) serves as cofactor.

It catalyses the reaction 7-[(3S)-3-amino-3-carboxypropyl]wyosine(37) in tRNA(Phe) + 2-oxoglutarate + O2 = 7-(2-hydroxy-3-amino-3-carboxypropyl)wyosine(37) in tRNA(Phe) + succinate + CO2. It functions in the pathway tRNA modification; wybutosine-tRNA(Phe) biosynthesis. TRNA hydroxylase that acts as a component of the wybutosine biosynthesis pathway. Wybutosine is a hyper modified guanosine with a tricyclic base found at the 3'-position adjacent to the anticodon of eukaryotic phenylalanine tRNA. Catalyzes the hydroxylation of 7-(a-amino-a-carboxypropyl)wyosine (yW-72) into undermodified hydroxywybutosine (OHyW*). OHyW* being further transformed into hydroxywybutosine (OHyW) by LCMT2/TYW4. OHyW is a derivative of wybutosine found in higher eukaryotes. The protein is tRNA wybutosine-synthesizing protein 5 (Tyw5) of Mus musculus (Mouse).